We begin with the raw amino-acid sequence, 185 residues long: Large ribosomal subunit protein uL5 (185 aa).

The protein belongs to the universal ribosomal protein uL5 family. Part of the 50S ribosomal subunit; part of the 5S rRNA/L5/L18/L25 subcomplex. Contacts the 5S rRNA and the P site tRNA. Forms a bridge to the 30S subunit in the 70S ribosome.

This is one of the proteins that bind and probably mediate the attachment of the 5S RNA into the large ribosomal subunit, where it forms part of the central protuberance. In the 70S ribosome it contacts protein S13 of the 30S subunit (bridge B1b), connecting the 2 subunits; this bridge is implicated in subunit movement. Contacts the P site tRNA; the 5S rRNA and some of its associated proteins might help stabilize positioning of ribosome-bound tRNAs. The sequence is that of Large ribosomal subunit protein uL5 from Afipia carboxidovorans (strain ATCC 49405 / DSM 1227 / KCTC 32145 / OM5) (Oligotropha carboxidovorans).